The following is a 494-amino-acid chain: Nuclear distribution protein PAC1 (494 aa).

One can recognise a LisH domain in the interval 14–46 (QKNELDKSVLRYLNWNYKQTVRHEHAQDYESVR). Positions 90–123 (NSIVRLQKKIIELEQNTETLVSQIKDLNTQVSEL) form a coiled coil. WD repeat units lie at residues 153 to 192 (NVESSVTSVKLHPNLPIVFVATDHGKLYAFDLFNYTIPLA), 196 to 244 (SHTK…CKFQ), 251 to 292 (GHEH…SLKT), 295 to 334 (PHSQWVRSIDVLGDYIISGSHDTTLRLTHWPSGNGLSVGT), 347 to 395 (HFIE…LMAH), 415 to 454 (GHLSWVRDISIRGQYLFSCADDKSVRCWDLNTGQCLHVWE), and 457 to 492 (HTGFVNSLDLDVDFDSNVTPRQMMVTGGLDCKSNVF).

The protein belongs to the WD repeat LIS1/nudF family. Self-associates. Interacts with NDL1 and dynein.

The protein localises to the cytoplasm. The protein resides in the cytoskeleton. It is found in the spindle pole. Its function is as follows. Positively regulates the activity of the minus-end directed microtubule motor protein dynein. Plays a central role in positioning the mitotic spindle at the bud neck during cell division. Targets cytoplasmic dynein to microtubule plus ends, thereby promoting dynein-mediated microtubule sliding along the bud cortex and consequently the movement of the mitotic spindle to the bud neck. The polypeptide is Nuclear distribution protein PAC1 (Saccharomyces cerevisiae (strain JAY291) (Baker's yeast)).